The primary structure comprises 200 residues: MSPIFDALVPMVVEQTSRGERSYDIYSRLLKERVIFLTGQVEDHMANLVVAQLLFLESENPDKDIFLYINSPGGSVTAGMSIYDTMQFIKPNVSTVCMGQACSMGAFLLAGGAPGKRYVLPNSRVMIHQPLGGFQGQASDIQIHAQEILTIKNKLNRLLAEHTGQPIEVIERDTDRDNFMSADQAVEYGLVDAVLKHRGE.

Serine 103 (nucleophile) is an active-site residue. The active site involves histidine 128.

Belongs to the peptidase S14 family. Fourteen ClpP subunits assemble into 2 heptameric rings which stack back to back to give a disk-like structure with a central cavity, resembling the structure of eukaryotic proteasomes.

It is found in the cytoplasm. The catalysed reaction is Hydrolysis of proteins to small peptides in the presence of ATP and magnesium. alpha-casein is the usual test substrate. In the absence of ATP, only oligopeptides shorter than five residues are hydrolyzed (such as succinyl-Leu-Tyr-|-NHMec, and Leu-Tyr-Leu-|-Tyr-Trp, in which cleavage of the -Tyr-|-Leu- and -Tyr-|-Trp bonds also occurs).. In terms of biological role, cleaves peptides in various proteins in a process that requires ATP hydrolysis. Has a chymotrypsin-like activity. Plays a major role in the degradation of misfolded proteins. This is ATP-dependent Clp protease proteolytic subunit from Vibrio cholerae serotype O1 (strain ATCC 39541 / Classical Ogawa 395 / O395).